A 212-amino-acid chain; its full sequence is Negative modulator of initiation of replication (212 aa).

Interaction with DNA regions lie at residues 113-114 and 144-148; these read AV and RTRVY.

It belongs to the SeqA family. As to quaternary structure, homodimer. Polymerizes to form helical filaments.

Its subcellular location is the cytoplasm. In terms of biological role, negative regulator of replication initiation, which contributes to regulation of DNA replication and ensures that replication initiation occurs exactly once per chromosome per cell cycle. Binds to pairs of hemimethylated GATC sequences in the oriC region, thus preventing assembly of replication proteins and re-initiation at newly replicated origins. Repression is relieved when the region becomes fully methylated. In Actinobacillus succinogenes (strain ATCC 55618 / DSM 22257 / CCUG 43843 / 130Z), this protein is Negative modulator of initiation of replication.